Here is a 144-residue protein sequence, read N- to C-terminus: uncharacterized protein (144 aa).

This is an uncharacterized protein from Escherichia coli O157:H7.